Here is a 39-residue protein sequence, read N- to C-terminus: SYSMEHFRWGKPVGRKRRPVKVYPNGVQEETSEGFPLEF.

At V13 the chain carries Valine amide.

The protein belongs to the POMC family.

The protein localises to the secreted. Its function is as follows. Precursor protein for pituitary hormones that regulate stress and environmental adaptation. In terms of biological role, stimulates the adrenal glands to release cortisol. Anorexigenic peptide. Increases the pigmentation of skin by increasing melanin production in melanocytes. In Struthio camelus (Common ostrich), this protein is Pro-opiomelanocortin (POMC).